The chain runs to 426 residues: Probable serine/threonine-protein kinase PBL3 (426 aa).

Positions 1–42 (MGNCLDSSAKVDSSSHSPHANSASLSSRVSSKTSRSTVPSSL) are disordered. Residue Gly2 is the site of N-myristoyl glycine attachment. Residue Cys4 is the site of S-palmitoyl cysteine attachment. Residues 7-42 (SSAKVDSSSHSPHANSASLSSRVSSKTSRSTVPSSL) show a composition bias toward low complexity. Position 72 is a phosphothreonine (Thr72). Residues 83–366 (FRPDSLLGEG…SEVLAKLDQL (284 aa)) form the Protein kinase domain. Residues 89–97 (LGEGGFGYV) and Lys121 contribute to the ATP site. Tyr166 is subject to Phosphotyrosine. Catalysis depends on Asp216, which acts as the Proton acceptor. Ser250 carries the post-translational modification Phosphoserine. 2 positions are modified to phosphothreonine: Thr251 and Thr256. Tyr264 is modified (phosphotyrosine). Positions 367-394 (ESTKPGTGVGNRQAQIDSPRGSNGSIVQ) are enriched in polar residues. The segment at 367-426 (ESTKPGTGVGNRQAQIDSPRGSNGSIVQKSPRRYSYDRPLLHITPGASPLPTHNHSPRVR) is disordered.

This sequence belongs to the protein kinase superfamily. Ser/Thr protein kinase family. As to quaternary structure, interacts with the Xanthomonas campestris effector XopAC/AvrAC. As to expression, strongly expressed in leaves, moderately in flowers, and barely in roots.

It is found in the cell membrane. Its subcellular location is the nucleus. It catalyses the reaction L-seryl-[protein] + ATP = O-phospho-L-seryl-[protein] + ADP + H(+). It carries out the reaction L-threonyl-[protein] + ATP = O-phospho-L-threonyl-[protein] + ADP + H(+). May be involved in plant defense signaling. This chain is Probable serine/threonine-protein kinase PBL3, found in Arabidopsis thaliana (Mouse-ear cress).